Consider the following 93-residue polypeptide: MANNKSAQKRIQVNERNRLQNRFYKSSVRTLIKVFLKNLEIYKTSKSPEGKEKLQKILSSVYSLIDKGTKKNVFHKNAAARKKAKLASSLKIS.

It belongs to the bacterial ribosomal protein bS20 family.

The protein resides in the plastid. Its subcellular location is the chloroplast. Its function is as follows. Binds directly to 16S ribosomal RNA. The sequence is that of Small ribosomal subunit protein bS20c from Phaeodactylum tricornutum (strain CCAP 1055/1).